We begin with the raw amino-acid sequence, 165 residues long: Endoribonuclease YbeY (165 aa).

Zn(2+) is bound by residues H119, H123, and H129.

Belongs to the endoribonuclease YbeY family. Zn(2+) is required as a cofactor.

It localises to the cytoplasm. Single strand-specific metallo-endoribonuclease involved in late-stage 70S ribosome quality control and in maturation of the 3' terminus of the 16S rRNA. In Streptomyces coelicolor (strain ATCC BAA-471 / A3(2) / M145), this protein is Endoribonuclease YbeY.